The primary structure comprises 248 residues: Lysine-rich arabinogalactan protein 19 (248 aa).

The signal sequence occupies residues 1–24 (MESNSIIWSLLLASALISSFSVNA). The span at 25–37 (QGPAASPVTSTTT) shows a compositional bias: low complexity. A disordered region spans residues 25–221 (QGPAASPVTS…APSPNTNGGN (197 aa)). Pro residues-rich tracts occupy residues 38-57 (APPPTTAAPPTTAAPPPTTT), 67-86 (PASPVTPPPAVTPTSPPAPK), and 94-171 (ATPP…PAPA). Residues 173–187 (TKHKRKHKHKRHHHA) show a composition bias toward basic residues. Residues 189-203 (APAPIPPSPPSPPVL) are compositionally biased toward pro residues. Serine 196 carries the GPI-anchor amidated serine lipid modification. The propeptide at 197 to 248 (PPSPPVLTDPQDTAPAPSPNTNGGNALNQLKGRAVMWLNTGLVILFLLAMTA) is removed in mature form.

This sequence belongs to the lysine-rich AGP family. Post-translationally, O-glycosylated on the hydroxyproline residues. In terms of tissue distribution, strongly expressed in stems, moderately expressed in flowers and roots and weakly expressed in young leaves.

Its subcellular location is the cell membrane. Its function is as follows. Proteoglycan that seems to be implicated in diverse developmental roles such as differentiation, cell-cell recognition, embryogenesis and programmed cell death. This is Lysine-rich arabinogalactan protein 19 (AGP19) from Arabidopsis thaliana (Mouse-ear cress).